A 677-amino-acid polypeptide reads, in one-letter code: Methionine--tRNA ligase (677 aa).

The short motif at 15–25 (PYANGSIHLGH) is the 'HIGH' region element. 4 residues coordinate Zn(2+): cysteine 146, cysteine 149, cysteine 159, and cysteine 162. The 'KMSKS' region signature appears at 333–337 (KMSKS). Lysine 336 is an ATP binding site. The tRNA-binding domain maps to 575–677 (DFAKIDLRVA…DGAKPGQQVK (103 aa)).

Belongs to the class-I aminoacyl-tRNA synthetase family. MetG type 1 subfamily. Homodimer. The cofactor is Zn(2+).

Its subcellular location is the cytoplasm. The catalysed reaction is tRNA(Met) + L-methionine + ATP = L-methionyl-tRNA(Met) + AMP + diphosphate. Is required not only for elongation of protein synthesis but also for the initiation of all mRNA translation through initiator tRNA(fMet) aminoacylation. The protein is Methionine--tRNA ligase of Salmonella agona (strain SL483).